Reading from the N-terminus, the 216-residue chain is Sperm microtubule inner protein 8 (216 aa).

In terms of assembly, microtubule inner protein component of sperm flagellar doublet microtubules.

It localises to the cytoplasm. It is found in the cytoskeleton. The protein resides in the flagellum axoneme. Microtubule inner protein (MIP) part of the dynein-decorated doublet microtubules (DMTs) in flagellum axoneme. May serve to reinforce and thus stabilize the microtubule structure in the sperm flagella. This Rattus norvegicus (Rat) protein is Sperm microtubule inner protein 8 (Spmip8).